Consider the following 681-residue polypeptide: Chaperone protein htpG (681 aa).

Residues 1 to 326 (MQKGNIGVTT…SPDIPLNVSR (326 aa)) form an a; substrate-binding region. A b region spans residues 327–545 (SYLQSDSNVK…YMRRMKEMAN (219 aa)). The c stretch occupies residues 546–681 (IQAGMSFYGE…NFVKRSIELI (136 aa)). The segment at 601-620 (DALKKKQEGKKDEDIPTAEK) is disordered.

The protein belongs to the heat shock protein 90 family. Homodimer.

The protein localises to the cytoplasm. Its function is as follows. Molecular chaperone. Has ATPase activity. The sequence is that of Chaperone protein htpG from Bacteroides fragilis (strain 638R).